The sequence spans 306 residues: SDS degradation transcriptional activation protein (306 aa).

The HTH lysR-type domain maps to 1–59; the sequence is MNDLRQLRHFVALAEHGHFARAAEAVNLSQPALSRSIQALENGLGCRLLDRGPRQVSLT. The H-T-H motif DNA-binding region spans 19–38; sequence FARAAEAVNLSQPALSRSIQ.

This sequence belongs to the LysR transcriptional regulatory family.

Activates the transcription of the sdsA gene for sodium dodecyl sulfate (SDS) degradation. The chain is SDS degradation transcriptional activation protein (sdsB) from Pseudomonas sp. (strain ATCC 19151).